The following is a 417-amino-acid chain: uncharacterized protein (417 aa).

The chain crosses the membrane as a helical span at residues 10–30; that stretch reads ALVCFSILSILVLACGCVNTP. The tract at residues 84–106 is disordered; sequence QENHPLQSNQNYEQTNGNFNEEN. The segment covering 86–106 has biased composition (polar residues); that stretch reads NHPLQSNQNYEQTNGNFNEEN. Residues 148–168 traverse the membrane as a helical segment; that stretch reads LYYIKVIDPIVGGLAGIDIYV.

It localises to the cell membrane. This is an uncharacterized protein from Methanocaldococcus jannaschii (strain ATCC 43067 / DSM 2661 / JAL-1 / JCM 10045 / NBRC 100440) (Methanococcus jannaschii).